Consider the following 150-residue polypeptide: D-aminoacyl-tRNA deacylase (150 aa).

Positions 138 to 139 (GP) match the Gly-cisPro motif, important for rejection of L-amino acids motif.

The protein belongs to the DTD family. In terms of assembly, homodimer.

The protein resides in the cytoplasm. The catalysed reaction is glycyl-tRNA(Ala) + H2O = tRNA(Ala) + glycine + H(+). It catalyses the reaction a D-aminoacyl-tRNA + H2O = a tRNA + a D-alpha-amino acid + H(+). An aminoacyl-tRNA editing enzyme that deacylates mischarged D-aminoacyl-tRNAs. Also deacylates mischarged glycyl-tRNA(Ala), protecting cells against glycine mischarging by AlaRS. Acts via tRNA-based rather than protein-based catalysis; rejects L-amino acids rather than detecting D-amino acids in the active site. By recycling D-aminoacyl-tRNA to D-amino acids and free tRNA molecules, this enzyme counteracts the toxicity associated with the formation of D-aminoacyl-tRNA entities in vivo and helps enforce protein L-homochirality. The polypeptide is D-aminoacyl-tRNA deacylase (Sorangium cellulosum (strain So ce56) (Polyangium cellulosum (strain So ce56))).